Here is a 249-residue protein sequence, read N- to C-terminus: DNA polymerase sliding clamp (249 aa).

It belongs to the PCNA family. In terms of assembly, homotrimer. The subunits circularize to form a toroid; DNA passes through its center. Replication factor C (RFC) is required to load the toroid on the DNA.

In terms of biological role, sliding clamp subunit that acts as a moving platform for DNA processing. Responsible for tethering the catalytic subunit of DNA polymerase and other proteins to DNA during high-speed replication. In Thermococcus gammatolerans (strain DSM 15229 / JCM 11827 / EJ3), this protein is DNA polymerase sliding clamp.